We begin with the raw amino-acid sequence, 147 residues long: Lysozyme C (147 aa).

An N-terminal signal peptide occupies residues 1 to 18 (MRSLLILVLCFLPLAALG). The 129-residue stretch at 19-147 (KVYGRCELAA…VHAWIRGCRL (129 aa)) folds into the C-type lysozyme domain. Disulfide bonds link Cys-24–Cys-145, Cys-48–Cys-133, Cys-82–Cys-98, and Cys-94–Cys-112.

It belongs to the glycosyl hydrolase 22 family. As to quaternary structure, monomer.

It is found in the secreted. It carries out the reaction Hydrolysis of (1-&gt;4)-beta-linkages between N-acetylmuramic acid and N-acetyl-D-glucosamine residues in a peptidoglycan and between N-acetyl-D-glucosamine residues in chitodextrins.. Functionally, lysozymes have primarily a bacteriolytic function; those in tissues and body fluids are associated with the monocyte-macrophage system and enhance the activity of immunoagents. This Meleagris gallopavo (Wild turkey) protein is Lysozyme C (LYZ).